The primary structure comprises 205 residues: ATP-dependent Clp protease proteolytic subunit (205 aa).

S108 functions as the Nucleophile in the catalytic mechanism. H133 is an active-site residue.

Belongs to the peptidase S14 family. In terms of assembly, fourteen ClpP subunits assemble into 2 heptameric rings which stack back to back to give a disk-like structure with a central cavity, resembling the structure of eukaryotic proteasomes.

It is found in the cytoplasm. The catalysed reaction is Hydrolysis of proteins to small peptides in the presence of ATP and magnesium. alpha-casein is the usual test substrate. In the absence of ATP, only oligopeptides shorter than five residues are hydrolyzed (such as succinyl-Leu-Tyr-|-NHMec, and Leu-Tyr-Leu-|-Tyr-Trp, in which cleavage of the -Tyr-|-Leu- and -Tyr-|-Trp bonds also occurs).. In terms of biological role, cleaves peptides in various proteins in a process that requires ATP hydrolysis. Has a chymotrypsin-like activity. Plays a major role in the degradation of misfolded proteins. The sequence is that of ATP-dependent Clp protease proteolytic subunit from Alcanivorax borkumensis (strain ATCC 700651 / DSM 11573 / NCIMB 13689 / SK2).